Consider the following 271-residue polypeptide: Methyltransferase psoC (271 aa).

This sequence belongs to the methyltransferase superfamily. LaeA methyltransferase family.

Its pathway is secondary metabolite biosynthesis. Methyltransferase; part of the gene cluster that mediates the biosynthesis of pseurotin A, a competitive inhibitor of chitin synthase and an inducer of nerve-cell proliferation. The PKS-NRPS hybrid synthetase psoA is responsible for the biosynthesis of azaspirene, one of the first intermediates having the 1-oxa-7-azaspiro[4,4]-non-2-ene-4,6-dione core of pseurotin, via condensation of one acetyl-CoA, 4 malonyl-CoA, and a L-phenylalanine molecule. The dual-functional monooxygenase/methyltransferase psoF seems to be involved in the addition of the C3 methyl group onto the pseurotin scaffold. Azaspirene is then converted to synerazol through 4 steps including oxidation of C17 by the cytochrome P450 monooxygenase psoD, O-methylation of the hydroxy group of C8 by the methyltransferase psoC, and the trans-to-cis isomerization of the C13 olefin by the glutathione S-transferase psoE. The fourth step of synerazol production is performed by the dual-functional monooxygenase/methyltransferase psoF which seems to catalyze the epoxidation of the intermediate deepoxy-synerazol. Synerazol can be attacked by a water molecule nonenzymatically at two different positions to yield two diol products, pseurotin A and pseurotin D. This Aspergillus fumigatus (strain ATCC MYA-4609 / CBS 101355 / FGSC A1100 / Af293) (Neosartorya fumigata) protein is Methyltransferase psoC.